Consider the following 178-residue polypeptide: Large ribosomal subunit protein uL10 (178 aa).

It belongs to the universal ribosomal protein uL10 family. As to quaternary structure, part of the ribosomal stalk of the 50S ribosomal subunit. The N-terminus interacts with L11 and the large rRNA to form the base of the stalk. The C-terminus forms an elongated spine to which L12 dimers bind in a sequential fashion forming a multimeric L10(L12)X complex.

Its function is as follows. Forms part of the ribosomal stalk, playing a central role in the interaction of the ribosome with GTP-bound translation factors. The sequence is that of Large ribosomal subunit protein uL10 from Dictyoglomus turgidum (strain DSM 6724 / Z-1310).